The sequence spans 230 residues: Modulator of macroautophagy TMEM150B-A (230 aa).

A topological domain (cytoplasmic) is located at residue M1. Residues 2–22 (WAWALLPICLTIWATAGIWIV) form a helical membrane-spanning segment. Over 23–50 (YGMSVSNGSVNLSDGFPYISLCGTDPPQ) the chain is Extracellular. N-linked (GlcNAc...) asparagine glycosylation is found at N29 and N33. A helical membrane pass occupies residues 51–71 (SCVFGQVLNVGAMLGVWISAI). Residues 72 to 83 (RFQQIRDYNCHS) lie on the Cytoplasmic side of the membrane. The chain crosses the membrane as a helical span at residues 84–104 (VLNSVSLAMGILCALGTSIVG). Residues 105 to 115 (NFQQSNQLETH) are Extracellular-facing. Residues 116-136 (LAGAFLAFVIGNIYFWMQTAL) traverse the membrane as a helical segment. At 137-150 (TYMVKPTHGGCYIG) the chain is on the cytoplasmic side. The chain crosses the membrane as a helical span at residues 151-171 (PIRFCLSVACTALIVLMAVFL). At 172-183 (KMNMKSISAICE) the chain is on the extracellular side. Residues 184–204 (WIVAMILFLLYGLFAVDFWHL) traverse the membrane as a helical segment. Topologically, residues 205-230 (DGHYFHVKKRTVIPNEMQVSTVTLSI) are cytoplasmic.

The protein belongs to the DRAM/TMEM150 family.

The protein localises to the cell membrane. It localises to the endosome membrane. It is found in the cytoplasmic vesicle. Its subcellular location is the autophagosome membrane. Modulator of macroautophagy that causes accumulation of autophagosomes under basal conditions and enhances autophagic flux. Represses cell death and promotes long-term clonogenic survival of cells grown in the absence of glucose in a macroautophagy-independent manner. May have some role in extracellular matrix engulfment or growth factor receptor recycling, both of which can modulate cell survival. In Xenopus laevis (African clawed frog), this protein is Modulator of macroautophagy TMEM150B-A.